Consider the following 440-residue polypeptide: MTTDVKAKNPASIFSHETLLHVLNDLSAHDLAALERVSRSWNSIVRRSSVWHNLYLSEFGTKHLRRHGRIEKKRRNWKGLFRRQSNWKDGRCKKVESMLPQLLNSEKSVGEDRLGLTLTHQNNIYFCNDVQISKWSSVGNSLKCQAISSFRDETVKSGPAVMCLDNASLYIGLKDGNLLHVTVHETGFGNIENLATFSTKFVALSSHKNYICGLTNDNNLYILQHSHQAGTKLKVLGKYHVSSIEKQVAIHFQQSKEGYEVVHVVFNDYVLSGGWTVSLQEFVFNEYCVKSSRLALHDNKDIEYSQQPASAIFMYGSYILTSHPDNSLILQRLYSTNNELRIKFLGRLLGHVCGVQISKLFSCGRIVSVSKNCADICVWDLHDTNYQSIVSPLMLTCTNIHNKPVSDYEKECKVQDIGLYEDTILITLSDGRILKFLFNI.

The 47-residue stretch at 8–54 folds into the F-box domain; that stretch reads KNPASIFSHETLLHVLNDLSAHDLAALERVSRSWNSIVRRSSVWHNL.

In terms of assembly, interacts with skp1.

It is found in the nucleus. The sequence is that of F-box protein pof12 (pof12) from Schizosaccharomyces pombe (strain 972 / ATCC 24843) (Fission yeast).